The primary structure comprises 122 residues: MIQMQTTLDVADNTGARAVMCIKVLGGSKRRYAGIGDIIKVSVKDAAPRGRVKKGEIYNAVVVRTAKGVRRKDGSLIRFGGNAAVLLNAKLEPIGTRIFGPVTRELRTEKFMKIVSLAPEVL.

Belongs to the universal ribosomal protein uL14 family. In terms of assembly, part of the 50S ribosomal subunit. Forms a cluster with proteins L3 and L19. In the 70S ribosome, L14 and L19 interact and together make contacts with the 16S rRNA in bridges B5 and B8.

Its function is as follows. Binds to 23S rRNA. Forms part of two intersubunit bridges in the 70S ribosome. This is Large ribosomal subunit protein uL14 from Bordetella avium (strain 197N).